An 878-amino-acid chain; its full sequence is Leucine--tRNA ligase (878 aa).

The short motif at 43-53 is the 'HIGH' region element; that stretch reads PYPSGRIHIGH. A 'KMSKS' region motif is present at residues 630–634; that stretch reads KMSKS. Lys-633 contacts ATP.

This sequence belongs to the class-I aminoacyl-tRNA synthetase family.

It localises to the cytoplasm. The enzyme catalyses tRNA(Leu) + L-leucine + ATP = L-leucyl-tRNA(Leu) + AMP + diphosphate. This Nitrobacter hamburgensis (strain DSM 10229 / NCIMB 13809 / X14) protein is Leucine--tRNA ligase.